The chain runs to 323 residues: MWPLVAALLLGSACCGSAQLLFNKTKSVEFTFCNDTVVIPCFVTNMEAQNTTEVYVKWKFKGRDIYTFDGALNKSTVPTDFSSAKIEVSQLLKGDASLKMDKSDAVSHTGNYTCEVTELTREGETIIELKYRVVSWFSPNENILIVIFPIFAILLFWGQFGIKTLKYRSGGMDEKTIALLVAGLVITVIVIVGAILFVPGEYSLKNATGLGLIVTSTGILILLHYYVFSTAIGLTSFVIAILVIQVIAYILAVVGLSLCIAACIPMHGPLLISGLSILALAQLLGLVYMKFVASNQKTIQPPRKAVEEPLNAFKESKGMMNDE.

The N-terminal stretch at 1 to 18 (MWPLVAALLLGSACCGSA) is a signal peptide. Gln-19 is modified (pyrrolidone carboxylic acid). The Ig-like V-type domain maps to 19 to 127 (QLLFNKTKSV…ELTREGETII (109 aa)). The Extracellular segment spans residues 19-141 (QLLFNKTKSV…RVVSWFSPNE (123 aa)). Asn-23, Asn-34, Asn-50, and Asn-73 each carry an N-linked (GlcNAc...) asparagine glycan. Intrachain disulfides connect Cys-33–Cys-263 and Cys-41–Cys-114. Residue Ser-89 is modified to Phosphoserine. N-linked (GlcNAc...) asparagine glycosylation is present at Asn-111. Residues 142 to 162 (NILIVIFPIFAILLFWGQFGI) traverse the membrane as a helical segment. Over 163–176 (KTLKYRSGGMDEKT) the chain is Cytoplasmic. The helical transmembrane segment at 177–197 (IALLVAGLVITVIVIVGAILF) threads the bilayer. At 198-207 (VPGEYSLKNA) the chain is on the extracellular side. Asn-206 is a glycosylation site (N-linked (GlcNAc...) asparagine). The helical transmembrane segment at 208–228 (TGLGLIVTSTGILILLHYYVF) threads the bilayer. Topologically, residues 229–235 (STAIGLT) are cytoplasmic. The helical transmembrane segment at 236–256 (SFVIAILVIQVIAYILAVVGL) threads the bilayer. Residues 257–268 (SLCIAACIPMHG) are Extracellular-facing. A helical membrane pass occupies residues 269-289 (PLLISGLSILALAQLLGLVYM). Residues 290–323 (KFVASNQKTIQPPRKAVEEPLNAFKESKGMMNDE) are Cytoplasmic-facing.

Monomer. Interacts with THBS1 (via the C-terminal domain). Interacts with SIRPA. Interacts with FAS/CD95; interaction may be enhanced by functional activation. Interacts with SIRPG, UBQLN1 and UBQLN2. May interact with fibrinogen. Interacts with Aedes aegypti neutrophil-stimulating factor 1; the interaction results in inhibition of phagocytosis activity of macrophages. In terms of tissue distribution, very broadly distributed on normal adult tissues, as well as ovarian tumors, being especially abundant in some epithelia and the brain. Macrophages.

The protein resides in the cell membrane. Functionally, adhesive protein that mediates cell-to-cell interactions. Acts as a receptor for thrombospondin THBS1 and as modulator of integrin signaling through the activation of heterotrimeric G proteins. Involved in signal transduction, cardiovascular homeostasis, inflammation, apoptosis, angiogenesis, cellular self-renewal, and immunoregulation. Plays a role in modulating pulmonary endothelin EDN1 signaling. Modulates nitrous oxide (NO) signaling, in response to THBS1, hence playing a role as a pressor agent, supporting blood pressure. Plays an important role in memory formation and synaptic plasticity in the hippocampus. Receptor for SIRPA, binding to which prevents maturation of immature dendritic cells and inhibits cytokine production by mature dendritic cells. Interaction with SIRPG mediates cell-cell adhesion, enhances superantigen-dependent T-cell-mediated proliferation and costimulates T-cell activation. Positively modulates FAS-dependent apoptosis in T-cells, perhaps by enhancing FAS clustering. Plays a role in suppressing angiogenesis and may be involved in metabolic dysregulation during normal aging. In response to THBS1, negatively modulates wound healing. Inhibits stem cell self-renewal, in response to THBS1, probably by regulation of the stem cell transcription factors POU5F1/OCT4, SOX2, MYC/c-Myc and KLF4. May play a role in membrane transport and/or integrin dependent signal transduction. May prevent premature elimination of red blood cells. This is Leukocyte surface antigen CD47 (CD47) from Homo sapiens (Human).